Reading from the N-terminus, the 185-residue chain is Photosystem I assembly protein Ycf4 (185 aa).

The next 2 membrane-spanning stretches (helical) occupy residues 21-43 and 63-85; these read NFCW…TSSY and GLVM…CTIL.

The protein belongs to the Ycf4 family.

It is found in the plastid. Its subcellular location is the chloroplast thylakoid membrane. Its function is as follows. Seems to be required for the assembly of the photosystem I complex. In Brassica oleracea (Wild cabbage), this protein is Photosystem I assembly protein Ycf4.